A 167-amino-acid polypeptide reads, in one-letter code: SsrA-binding protein (167 aa).

Belongs to the SmpB family.

It is found in the cytoplasm. Its function is as follows. Required for rescue of stalled ribosomes mediated by trans-translation. Binds to transfer-messenger RNA (tmRNA), required for stable association of tmRNA with ribosomes. tmRNA and SmpB together mimic tRNA shape, replacing the anticodon stem-loop with SmpB. tmRNA is encoded by the ssrA gene; the 2 termini fold to resemble tRNA(Ala) and it encodes a 'tag peptide', a short internal open reading frame. During trans-translation Ala-aminoacylated tmRNA acts like a tRNA, entering the A-site of stalled ribosomes, displacing the stalled mRNA. The ribosome then switches to translate the ORF on the tmRNA; the nascent peptide is terminated with the 'tag peptide' encoded by the tmRNA and targeted for degradation. The ribosome is freed to recommence translation, which seems to be the essential function of trans-translation. In Stenotrophomonas maltophilia (strain R551-3), this protein is SsrA-binding protein.